The following is a 338-amino-acid chain: tRNA N6-adenosine threonylcarbamoyltransferase (338 aa).

Positions 114 and 118 each coordinate Fe cation. Substrate is bound by residues 137–141 (IVSGG), aspartate 170, glycine 183, aspartate 187, and asparagine 277. Position 305 (aspartate 305) interacts with Fe cation.

It belongs to the KAE1 / TsaD family. The cofactor is Fe(2+).

The protein resides in the cytoplasm. The enzyme catalyses L-threonylcarbamoyladenylate + adenosine(37) in tRNA = N(6)-L-threonylcarbamoyladenosine(37) in tRNA + AMP + H(+). Required for the formation of a threonylcarbamoyl group on adenosine at position 37 (t(6)A37) in tRNAs that read codons beginning with adenine. Is involved in the transfer of the threonylcarbamoyl moiety of threonylcarbamoyl-AMP (TC-AMP) to the N6 group of A37, together with TsaE and TsaB. TsaD likely plays a direct catalytic role in this reaction. This is tRNA N6-adenosine threonylcarbamoyltransferase from Clostridioides difficile (strain 630) (Peptoclostridium difficile).